Consider the following 156-residue polypeptide: NAD(P)H-quinone oxidoreductase subunit N (156 aa).

It belongs to the complex I NdhN subunit family. NDH-1 can be composed of about 15 different subunits; different subcomplexes with different compositions have been identified which probably have different functions.

The protein resides in the cellular thylakoid membrane. The enzyme catalyses a plastoquinone + NADH + (n+1) H(+)(in) = a plastoquinol + NAD(+) + n H(+)(out). It catalyses the reaction a plastoquinone + NADPH + (n+1) H(+)(in) = a plastoquinol + NADP(+) + n H(+)(out). Its function is as follows. NDH-1 shuttles electrons from an unknown electron donor, via FMN and iron-sulfur (Fe-S) centers, to quinones in the respiratory and/or the photosynthetic chain. The immediate electron acceptor for the enzyme in this species is believed to be plastoquinone. Couples the redox reaction to proton translocation, and thus conserves the redox energy in a proton gradient. Cyanobacterial NDH-1 also plays a role in inorganic carbon-concentration. The polypeptide is NAD(P)H-quinone oxidoreductase subunit N (Prochlorococcus marinus (strain MIT 9515)).